The sequence spans 636 residues: Asparagine synthetase domain-containing protein 1 (636 aa).

Cys-2 serves as the catalytic Nucleophile. The Glutamine amidotransferase type-2 domain occupies 2 to 187 (CGICCVVALS…ASGIFKMDLR (186 aa)). Residues 291-607 (QFIDVLDEAV…GLEAASILPK (317 aa)) enclose the Asparagine synthetase domain.

This Gallus gallus (Chicken) protein is Asparagine synthetase domain-containing protein 1 (ASNSD1).